A 272-amino-acid chain; its full sequence is Shikimate dehydrogenase (NADP(+)) (272 aa).

Residues 14 to 16 (SKS) and Thr-61 each bind shikimate. Lys-65 (proton acceptor) is an active-site residue. Residue Glu-77 coordinates NADP(+). Shikimate-binding residues include Asn-86 and Asp-102. NADP(+) contacts are provided by residues 126-130 (GAGGA), 149-154 (NRTASR), and Met-213. Shikimate is bound at residue Tyr-215. Residue Gly-237 coordinates NADP(+).

Belongs to the shikimate dehydrogenase family. As to quaternary structure, homodimer.

The catalysed reaction is shikimate + NADP(+) = 3-dehydroshikimate + NADPH + H(+). The protein operates within metabolic intermediate biosynthesis; chorismate biosynthesis; chorismate from D-erythrose 4-phosphate and phosphoenolpyruvate: step 4/7. Its function is as follows. Involved in the biosynthesis of the chorismate, which leads to the biosynthesis of aromatic amino acids. Catalyzes the reversible NADPH linked reduction of 3-dehydroshikimate (DHSA) to yield shikimate (SA). The chain is Shikimate dehydrogenase (NADP(+)) from Salmonella paratyphi A (strain ATCC 9150 / SARB42).